The chain runs to 179 residues: Large ribosomal subunit protein uL6 (179 aa).

Belongs to the universal ribosomal protein uL6 family. Part of the 50S ribosomal subunit.

This protein binds to the 23S rRNA, and is important in its secondary structure. It is located near the subunit interface in the base of the L7/L12 stalk, and near the tRNA binding site of the peptidyltransferase center. This Trichodesmium erythraeum (strain IMS101) protein is Large ribosomal subunit protein uL6.